The chain runs to 411 residues: L-cysteine:1D-myo-inositol 2-amino-2-deoxy-alpha-D-glucopyranoside ligase (411 aa).

Cys-43 provides a ligand contact to Zn(2+). Residues 43–46, Thr-58, and 81–83 each bind L-cysteinyl-5'-AMP; these read CGIT and NVT. The 'HIGH' region signature appears at 45–55; sequence ITPYDATHLGH. The short motif at 186–191 is the 'ERGGDP' region element; sequence QRGGDP. Residue Trp-226 coordinates L-cysteinyl-5'-AMP. Cys-230 contributes to the Zn(2+) binding site. Position 248 to 250 (248 to 250) interacts with L-cysteinyl-5'-AMP; that stretch reads GSD. His-255 is a Zn(2+) binding site. Ile-282 is a binding site for L-cysteinyl-5'-AMP. The 'KMSKS' region signature appears at 288-292; the sequence is KMSKS.

The protein belongs to the class-I aminoacyl-tRNA synthetase family. MshC subfamily. In terms of assembly, monomer. Zn(2+) is required as a cofactor.

It carries out the reaction 1D-myo-inositol 2-amino-2-deoxy-alpha-D-glucopyranoside + L-cysteine + ATP = 1D-myo-inositol 2-(L-cysteinylamino)-2-deoxy-alpha-D-glucopyranoside + AMP + diphosphate + H(+). Functionally, catalyzes the ATP-dependent condensation of GlcN-Ins and L-cysteine to form L-Cys-GlcN-Ins. The sequence is that of L-cysteine:1D-myo-inositol 2-amino-2-deoxy-alpha-D-glucopyranoside ligase from Mycobacterium marinum (strain ATCC BAA-535 / M).